The chain runs to 1280 residues: MRKTPSHTEKKMVYSIRSLKNGTGSVLIGASLVLLAMATPTISSDESTPTTNEPNNRNTTTLAQPLTDTAAGSGKNESDISSPGNANASLEKTEEKPAASPADPAPQTGQDRSSEPTTSTSPVTTETKAEEPIEDNYFRIHVKKLPEENKDAQGLWTWDDVEKPSENWPNGALSFKDAKKDDYGYYLDVKLKGEQAKKISFLINNTAGKNLTGDKSVEKLVPKMNEAWLDQDYKVFSYEPQPAGTVRVNYYRTDGNYDKKSLWYWGDVKNPSSAQWPDGTDFTATGKYGRYIDIPLNEAAREFGFLLLDESKQGDDVKIRKENYKFTDLKNHSQIFLKDDDESIYTNPYYVHDIRMTGAQHVGTSSIESSFSTLVGAKKEDILKHSNITNHLGNKVTITDVAIDEAGKKVTYSGDFSDTKHPYTVSYNSDQFTTKTSWRLKDETYSYDGKLGADLKEEGKQVDLTLWSPSADKVSVVVYDKNDPDKVVGTVALEKGERGTWKQTLDSTNKLGITDFTGYYYQYQIERQGKTVLALDPYAKSLAAWNSDDSKIDDAHKVAKAAFVDPAKLGPQDLTYGKIHNFKTREDAVIYEAHVRDFTSDPAIAKDLTKPFGTFEAFIEKLDYLKDLGVTHIQLLPVLSYYFVNELKNHERLSDYASSNSNYNWGYDPQNYFSLTGMYSSDPKNPEKRIAEFKNLINEIHKRGMGAILDVVYNHTAKVDLFEDLEPNYYHFMDADGTPRTSFGGGRLGTTHHMTKRLLIDSIKYLVDTYKVDGFRFDMMGDHDAASIEEAYKAARALNPNLIMLGEGWRTYAGDENMPTKAADQDWMKHTDTVAVFSDDIRNNLKSGYPNEGQPAFITGGKRDVNTIFKNLIAQPTNFEADSPGDVIQYIAAHDNLTLFDIIAQSIKKDPSKAENYAEIHRRLRLGNLMVLTAQGTPFIHSGQEYGRTKQFRDPAYKTPVAEDKVPNKSHLLRDKDGNPFDYPYFIHDSYDSSDAVNKFDWTKATDGKAYPENVKSRDYMKGLIALRQSTDAFRLKSLQDIKDRVHLITVPGQNGVEKEDVVIGYQITAPNGDIYAVFVNADEKAREFNLGTAFAHLRNAEVLADENQAGPVGIANPKGLEWTEKGLKLNALTATVLRVSQNGTSHESTAEEKPDSTPSKPEHQNEASHPAHQDPAPEARPDSTKPDAKVADAENKPSQATADSQAEQPAQEAQASSVKEAVRNESVENSSKENIPATPDKQAELPNTGIKNENKLLFAGISLLALLGLGFLLKNKKEN.

Positions 1-44 (MRKTPSHTEKKMVYSIRSLKNGTGSVLIGASLVLLAMATPTISS) are cleaved as a signal peptide. The interval 42-132 (ISSDESTPTT…VTTETKAEEP (91 aa)) is disordered. Over residues 48–61 (TPTTNEPNNRNTTT) the composition is skewed to low complexity. Over residues 79–90 (DISSPGNANASL) the composition is skewed to polar residues. The segment covering 115-126 (EPTTSTSPVTTE) has biased composition (low complexity). Residues 156–158 (WTW), Trp168, Asp214, 263–265 (WYW), Trp276, Lys318, and Asn323 each bind substrate. Residues Ser661 and Tyr663 each contribute to the Ca(2+) site. Substrate is bound by residues 667–668 (YD) and Phe743. Residue Asp778 is the Nucleophile of the active site. The active-site Proton donor is the Glu807. A substrate-binding site is contributed by Trp809. Ca(2+)-binding residues include Met828, Thr831, and Asp832. 3 residues coordinate substrate: Asp839, Arg842, and Tyr849. Ca(2+) contacts are provided by Asp882 and Asp886. Residues Asn896, Lys969, and 989-991 (DSY) contribute to the substrate site. Asp992 lines the Ca(2+) pocket. The disordered stretch occupies residues 1140–1248 (VSQNGTSHES…TPDKQAELPN (109 aa)). The segment covering 1149–1196 (STAEEKPDSTPSKPEHQNEASHPAHQDPAPEARPDSTKPDAKVADAEN) has biased composition (basic and acidic residues). The segment covering 1205–1218 (SQAEQPAQEAQASS) has biased composition (low complexity). Residues 1246 to 1250 (LPNTG) carry the LPXTG sorting signal motif. Residue Thr1249 is modified to Pentaglycyl murein peptidoglycan amidated threonine. Residues 1250 to 1280 (GIKNENKLLFAGISLLALLGLGFLLKNKKEN) constitute a propeptide, removed by sortase.

Belongs to the glycosyl hydrolase 13 family.

The protein localises to the secreted. The protein resides in the cell wall. It localises to the cell surface. The catalysed reaction is Hydrolysis of (1-&gt;6)-alpha-D-glucosidic linkages in pullulan, amylopectin and glycogen, and in the alpha- and beta-limit dextrins of amylopectin and glycogen.. Its activity is regulated as follows. Inhibited by 4-O-alpha-D-glucopyranosylmoranoline (G1M). In terms of biological role, virulence factor. Involved in the degradation of glycogen of the mammalian host cells. Hydrolyzes the alpha-1,6-branchpoints of glycogen. Hydrolyzes pullulan. Does not hydrolyze dextran. Binds to mouse lung alveolar type II cells that are rich in glycogen stores. Is an alpha-glucan-specific carbohydrate-binding protein, which binds to amylose (pure alpha-(1,4)-linked glucose), amylopectin (alpha-(1,4)-linked glucose with alpha-(1,6) branch points), pullulan (linear polymer of mixed alpha-(1,4)- and alpha-(1,6)-linked glucose) and glycogen (similar to amylopectin with more frequent alpha-(1,6) branch points) in vitro. Does not bind to dextran (a linear polymer of alpha-(1,6)-linked glucose). This chain is Pullulanase A, found in Streptococcus pneumoniae serotype 4 (strain ATCC BAA-334 / TIGR4).